The sequence spans 312 residues: Serine/threonine-protein kinase ppk11 (312 aa).

The 253-residue stretch at 6-258 folds into the Protein kinase domain; the sequence is YRDLQLIGQG…AEYLSKHKFI (253 aa). Residues 12–20 and Lys35 each bind ATP; that span reads IGQGSFGSV. The Proton acceptor role is filled by Asp127.

The protein belongs to the protein kinase superfamily. Ser/Thr protein kinase family.

The protein localises to the cytoplasm. The protein resides in the nucleus. It catalyses the reaction L-seryl-[protein] + ATP = O-phospho-L-seryl-[protein] + ADP + H(+). The enzyme catalyses L-threonyl-[protein] + ATP = O-phospho-L-threonyl-[protein] + ADP + H(+). This Schizosaccharomyces pombe (strain 972 / ATCC 24843) (Fission yeast) protein is Serine/threonine-protein kinase ppk11 (ppk11).